A 410-amino-acid chain; its full sequence is Killer cell immunoglobulin-like receptor 3DL3 (410 aa).

The signal sequence occupies residues 1-25 (MSLMVVSMACVGFFLLEGPWPHVGG). The Extracellular portion of the chain corresponds to 26–322 (QDKPFLSAWP…VSVTGNSRHL (297 aa)). 3 Ig-like C2-type domains span residues 42–97 (GQHV…RCCS), 137–197 (GETV…RCFG), and 237–295 (GENV…RCFG). 2 cysteine pairs are disulfide-bonded: C49–C95 and C144–C195. N179, N239, and N273 each carry an N-linked (GlcNAc...) asparagine glycan. C244 and C293 are joined by a disulfide. A helical transmembrane segment spans residues 323–343 (HVLIGTSVVIIPFAILLFFLL). Over 344-410 (HRWCANKKNA…PKTPPTDTSV (67 aa)) the chain is Cytoplasmic.

Belongs to the immunoglobulin superfamily.

It localises to the cell membrane. Receptor on natural killer cells. May inhibit the activity of NK cells thus preventing cell lysis. This chain is Killer cell immunoglobulin-like receptor 3DL3 (KIR3DL3), found in Homo sapiens (Human).